The primary structure comprises 344 residues: L-erythro-3,5-diaminohexanoate dehydrogenase (344 aa).

The protein belongs to the KDD family. In terms of assembly, homodimer.

The enzyme catalyses (3S,5S)-3,5-diaminohexanoate + NAD(+) + H2O = (5S)-5-amino-3-oxohexanoate + NH4(+) + NADH + H(+). It functions in the pathway amino-acid degradation; L-lysine degradation via acetate pathway. Functionally, involved in the anaerobic fermentation of lysine. Catalyzes the oxidative deamination of L-erythro-3,5-diaminohexanoate (3,5-DAH) to 3-keto-5-aminohexanoate (KAH). The polypeptide is L-erythro-3,5-diaminohexanoate dehydrogenase (Acetoanaerobium sticklandii (strain ATCC 12662 / DSM 519 / JCM 1433 / CCUG 9281 / NCIMB 10654 / HF) (Clostridium sticklandii)).